Reading from the N-terminus, the 166-residue chain is NAD(P)H-quinone oxidoreductase subunit I, chloroplastic (166 aa).

4Fe-4S ferredoxin-type domains are found at residues 55-84 and 95-124; these read GRIH…VDWK and LNYS…MTEE. Residues Cys-64, Cys-67, Cys-70, Cys-74, Cys-104, Cys-107, Cys-110, and Cys-114 each contribute to the [4Fe-4S] cluster site.

It belongs to the complex I 23 kDa subunit family. In terms of assembly, NDH is composed of at least 16 different subunits, 5 of which are encoded in the nucleus. [4Fe-4S] cluster is required as a cofactor.

Its subcellular location is the plastid. The protein localises to the chloroplast thylakoid membrane. The enzyme catalyses a plastoquinone + NADH + (n+1) H(+)(in) = a plastoquinol + NAD(+) + n H(+)(out). It catalyses the reaction a plastoquinone + NADPH + (n+1) H(+)(in) = a plastoquinol + NADP(+) + n H(+)(out). Functionally, NDH shuttles electrons from NAD(P)H:plastoquinone, via FMN and iron-sulfur (Fe-S) centers, to quinones in the photosynthetic chain and possibly in a chloroplast respiratory chain. The immediate electron acceptor for the enzyme in this species is believed to be plastoquinone. Couples the redox reaction to proton translocation, and thus conserves the redox energy in a proton gradient. This chain is NAD(P)H-quinone oxidoreductase subunit I, chloroplastic, found in Sigesbeckia blakei.